We begin with the raw amino-acid sequence, 445 residues long: MQENYKAKAYDILKNLNIEEGDLIEIKKGDLRIRGILLPSYSKDERIFVIKLDNGYNIGISIDNISEIKLITKNSSKAQESERKEVSRNGAKSEIKIISTGGTIVSKVEYETGAVRPALTTEEIVQFLPEINEIAKVDAEVLFSILSENMKPEYWVKIAESVKKAFGEGNTGVVIAHGTDTMAYTASALAFSLRSLQGPVVLVGSQRSSDRPSSDSAINLLSAVTTAKYAPFGEVVVNMHADSSDTYALVHRGVKVRKMHSSRRDAFQSVNDKPLAKVLWKERKLVMLDKSYMSKKGETTLDAKFDNRAFLLYYYPGLDRDFLEHILTNTKIRGLIIAGTGLGHTSSDYVELFRKATKDGIFIGMTTQCLFGRVNMNVYTTGRQLLDAGVTPLEDMLPEVALVKLMWVLAHEQDLEKIRSLMISNLVGEINPRHTLDLFPRWSYE.

An Asparaginase/glutaminase domain is found at serine 93 to asparagine 425. Active-site residues include threonine 103, threonine 179, aspartate 180, and lysine 258.

Belongs to the asparaginase 1 family. GatD subfamily. Heterodimer of GatD and GatE.

The enzyme catalyses L-glutamyl-tRNA(Gln) + L-glutamine + ATP + H2O = L-glutaminyl-tRNA(Gln) + L-glutamate + ADP + phosphate + H(+). Functionally, allows the formation of correctly charged Gln-tRNA(Gln) through the transamidation of misacylated Glu-tRNA(Gln) in organisms which lack glutaminyl-tRNA synthetase. The reaction takes place in the presence of glutamine and ATP through an activated gamma-phospho-Glu-tRNA(Gln). The GatDE system is specific for glutamate and does not act on aspartate. This chain is Glutamyl-tRNA(Gln) amidotransferase subunit D, found in Saccharolobus islandicus (strain L.S.2.15 / Lassen #1) (Sulfolobus islandicus).